Reading from the N-terminus, the 175-residue chain is Arsenite oxidase subunit AioB (175 aa).

Residues 1-32 (MSDTINLTRRGFLKVSGSGVAVAATLSPIASA) constitute a signal peptide (tat-type signal). The 97-residue stretch at 62-158 (NEPVSFTYPD…LRYDEASDAL (97 aa)) folds into the Rieske domain. Positions 102, 104, 120, and 123 each coordinate [2Fe-2S] cluster. C107 and C122 form a disulfide bridge.

Belongs to the AOX family. In terms of assembly, heterodimer consisting of a large and a small subunit. Requires [2Fe-2S] cluster as cofactor. Predicted to be exported by the Tat system. The position of the signal peptide cleavage has not been experimentally proven.

It carries out the reaction 2 oxidized [azurin] + arsenite + H2O = 2 reduced [azurin] + arsenate + 3 H(+). Its function is as follows. Involved in the detoxification of arsenic. Oxidizes As(III)O3(3-) (arsenite) to the somewhat less toxic As(V)O4(3-) (arsenate). In Alcaligenes faecalis, this protein is Arsenite oxidase subunit AioB (aioB).